The chain runs to 319 residues: MDTSFFPGNHWLFFSVDLLVFLVGLPLNVMALVVFVNKLRRRPVAVDLLLLNLTISDLLLLLFLPFRIVEAACGMKWILPFIFCPLSGFLFFTTIYLTSLFLMTVSIERFLSVAYPLWYKTRPRLAQAGLVSGICWFLASAHCSVIYVTEYWGNATYSQGTNGTCYLEFREDQLAILLPVRLEMAVVLFMVPLCITSYCYSRLVWILSQGASRRRRKRVMGLLVATLLIFFVCFGPYNMSHVVGYVRGESPTWRSYVLLLSTLNSCIDPLVFYFSSSKFQADFHQLLSRLIRACVPWTQEVSLELKVKNGEEPSKECPS.

Residues 1–15 are Extracellular-facing; sequence MDTSFFPGNHWLFFS. A helical transmembrane segment spans residues 16–36; that stretch reads VDLLVFLVGLPLNVMALVVFV. The Cytoplasmic portion of the chain corresponds to 37–43; sequence NKLRRRP. A helical membrane pass occupies residues 44–64; that stretch reads VAVDLLLLNLTISDLLLLLFL. Over 65–98 the chain is Extracellular; sequence PFRIVEAACGMKWILPFIFCPLSGFLFFTTIYLT. Cysteine 84 and cysteine 165 form a disulfide bridge. The helical transmembrane segment at 99 to 119 threads the bilayer; it reads SLFLMTVSIERFLSVAYPLWY. At 120–127 the chain is on the cytoplasmic side; it reads KTRPRLAQ. The chain crosses the membrane as a helical span at residues 128 to 148; the sequence is AGLVSGICWFLASAHCSVIYV. Topologically, residues 149 to 183 are extracellular; that stretch reads TEYWGNATYSQGTNGTCYLEFREDQLAILLPVRLE. Residues 184-206 form a helical membrane-spanning segment; sequence MAVVLFMVPLCITSYCYSRLVWI. The Cytoplasmic segment spans residues 207–218; that stretch reads LSQGASRRRRKR. A helical membrane pass occupies residues 219–239; that stretch reads VMGLLVATLLIFFVCFGPYNM. Topologically, residues 240–254 are extracellular; it reads SHVVGYVRGESPTWR. A helical membrane pass occupies residues 255–275; that stretch reads SYVLLLSTLNSCIDPLVFYFS. The Cytoplasmic portion of the chain corresponds to 276 to 319; it reads SSKFQADFHQLLSRLIRACVPWTQEVSLELKVKNGEEPSKECPS.

The protein belongs to the G-protein coupled receptor 1 family. As to expression, expressed in the sympathetic nervous system.

It localises to the cell membrane. Its function is as follows. G protein-coupled receptor that is activated by a major product of dietary fiber digestion, the short chain fatty acids (SCFAs), and that plays a role in the regulation of whole-body energy homeostasis and in intestinal immunity. In omnivorous mammals, the short chain fatty acids acetate, propionate and butyrate are produced primarily by the gut microbiome that metabolizes dietary fibers. SCFAs serve as a source of energy but also act as signaling molecules. That G protein-coupled receptor is probably coupled to the pertussis toxin-sensitive, G(i/o)-alpha family of G proteins. Its activation results in the formation of inositol 1,4,5-trisphosphate, the mobilization of intracellular calcium, the phosphorylation of the MAPK3/ERK1 and MAPK1/ERK2 kinases and the inhibition of intracellular cAMP accumulation. Activated by SCFAs and by beta-hydroxybutyrate, a ketone body produced by the liver upon starvation, it inhibits N-type calcium channels and modulates the activity of sympathetic neurons through a signaling cascade involving the beta and gamma subunits of its coupled G protein, phospholipase C and MAP kinases. Thereby, it may regulate energy expenditure through the control of the sympathetic nervous system that controls for instance heart rate. Upon activation by SCFAs accumulating in the intestine, it may also signal to the brain via neural circuits which in turn would regulate intestinal gluconeogenesis. May also control the production of hormones involved in whole-body energy homeostasis. May for instance, regulate blood pressure through renin secretion. May also regulate secretion of the PYY peptide by enteroendocrine cells and control gut motility, intestinal transit rate, and the harvesting of energy from SCFAs produced by gut microbiota. May also indirectly regulate the production of LEP/Leptin, a hormone acting on the CNS to inhibit food intake, in response to the presence of short-chain fatty acids in the intestine. Finally, may also play a role in glucose homeostasis. Besides its role in energy homeostasis, may play a role in intestinal immunity. May mediate the activation of the inflammatory and immune response by SCFAs in the gut, regulating the rapid production of chemokines and cytokines by intestinal epithelial cells. The protein is Free fatty acid receptor 3 (Ffar3) of Rattus norvegicus (Rat).